The primary structure comprises 262 residues: 3-methyl-2-oxobutanoate hydroxymethyltransferase (262 aa).

Residues aspartate 44 and aspartate 83 each contribute to the Mg(2+) site. Residues 44 to 45 (DS), aspartate 83, and lysine 112 each bind 3-methyl-2-oxobutanoate. Residue glutamate 114 participates in Mg(2+) binding. Glutamate 177 (proton acceptor) is an active-site residue.

Belongs to the PanB family. Homodecamer; pentamer of dimers. Mg(2+) is required as a cofactor.

The protein localises to the cytoplasm. The enzyme catalyses 3-methyl-2-oxobutanoate + (6R)-5,10-methylene-5,6,7,8-tetrahydrofolate + H2O = 2-dehydropantoate + (6S)-5,6,7,8-tetrahydrofolate. Its pathway is cofactor biosynthesis; coenzyme A biosynthesis. In terms of biological role, catalyzes the reversible reaction in which hydroxymethyl group from 5,10-methylenetetrahydrofolate is transferred onto alpha-ketoisovalerate to form ketopantoate. This chain is 3-methyl-2-oxobutanoate hydroxymethyltransferase, found in Metallosphaera sedula (strain ATCC 51363 / DSM 5348 / JCM 9185 / NBRC 15509 / TH2).